The primary structure comprises 1514 residues: Neurexin-1 (1514 aa).

Positions 1-30 (MGTALVQRGGCCLLCLSLLLLGCWAELGSG) are cleaved as a signal peptide. Residues 31–217 (LEFPGAEGQW…PPNSGGGSPC (187 aa)) enclose the Laminin G-like 1 domain. Topologically, residues 31–1438 (LEFPGAEGQW…EVIRESSSTT (1408 aa)) are extracellular. Residues Asn125 and Asn190 are each glycosylated (N-linked (GlcNAc...) asparagine). Residues 197–221 (VDGGEVKLDDEPPNSGGGSPCEAGE) form a disordered region. Residues 219–256 (AGEEGEGGVCLNGGVCSVVDDQAVCDCSRTGFRGKDCS) enclose the EGF-like 1 domain. Cystine bridges form between Cys228–Cys243 and Cys245–Cys255. Laminin G-like domains are found at residues 283–480 (IATF…AFKC) and 487–679 (DPIT…KPSC). Residues Asp329, Leu346, and Met414 each contribute to the Ca(2+) site. 5 disulfides stabilise this stretch: Cys444–Cys480, Cys650–Cys679, Cys687–Cys698, Cys692–Cys707, and Cys709–Cys719. The region spanning 683 to 720 (TAKPCLSNPCKNNGMCRDGWNRYVCDCSGTGYLGRSCE) is the EGF-like 2 domain. Laminin G-like domains lie at 725–898 (VLSY…IDYC) and 912–1087 (DPVT…ERGC). Asp772 and Leu789 together coordinate Ca(2+). N-linked (GlcNAc...) asparagine glycosylation is present at Asn797. Arg848 provides a ligand contact to Ca(2+). 5 disulfides stabilise this stretch: Cys890/Cys898, Cys1059/Cys1087, Cys1094/Cys1105, Cys1099/Cys1114, and Cys1116/Cys1126. In terms of domain architecture, EGF-like 3 spans 1090–1127 (PSTTCQEDSCSNQGVCLQQWDGFSCDCSMTSFSGPLCN). A Laminin G-like 6 domain is found at 1133-1331 (YIFSKGGGQI…DANIAIVGNV (199 aa)). Residues Asp1183 and Val1200 each contribute to the Ca(2+) site. The N-linked (GlcNAc...) asparagine glycan is linked to Asn1230. The Ca(2+) site is built by Ile1282 and Asn1284. Ser1392 carries an O-linked (Xyl...) (heparan sulfate) serine glycan. A disordered region spans residues 1396 to 1427 (PSDDEDIDPCEPSSGGLANPTRVGGREPYPGS). The chain crosses the membrane as a helical span at residues 1439 to 1459 (GMVVGIVAAAALCILILLYAM). The Cytoplasmic segment spans residues 1460-1514 (YKYRNRDEGSYHVDESRNYISNSAQSNGAVVKEKQPSSAKSANKNKKNKDKEYYV). Residues 1481-1507 (NSAQSNGAVVKEKQPSSAKSANKNKKN) are interaction with CASK. Positions 1481-1514 (NSAQSNGAVVKEKQPSSAKSANKNKKNKDKEYYV) are disordered.

The protein belongs to the neurexin family. In terms of assembly, interacts (via laminin G-like domain 2 and/or laminin G-like domain 6) with NLGN1 forming a heterotetramer, where one NLGN1 dimer interacts with one NRXN1 dimer. Also interacts (via laminin G-like domain 2 and/or laminin G-like domain 6) with NLGN2, NLGN3 and NLGN4L; interactions with NLGN1, NLGN2, NLGN3 and NLGN4L are calcium-dependent. Interacts (via cytoplasmic C-terminal region) with CASK (via the PDZ, SH3 and guanylate kinase-like domains). Interacts (via cytoplasmic C-terminus) with CASKIN1 and APBA1. Interacts (via laminin G-like domain 2) with NXPH1 and NXPH3. Alpha-type isoforms (neurexin-1-alpha) interact (via laminin G-like domain 2 and/or laminin G-like domain 6) with DAG1 (via alpha-dystroglycan chain). Interacts with LRRTM1, LRRTM2, LRRTM3 and LRRTM4. Interacts with SYT13 and SYTL1. Interacts with CBLN1, CBLN2 and, less avidly, with CBLN4. Interacts with CLSTN3. Post-translationally, O-glycosylated; contains heparan sulfate. Heparan sulfate attachment is required for synapse development by mediating interactions with neuroligins and LRRTM2.

It localises to the presynaptic cell membrane. Cell surface protein involved in cell-cell-interactions, exocytosis of secretory granules and regulation of signal transmission. Function is isoform-specific. Alpha-type isoforms have a long N-terminus with six laminin G-like domains and play an important role in synaptic signal transmission. Alpha-type isoforms play a role in the regulation of calcium channel activity and Ca(2+)-triggered neurotransmitter release at synapses and at neuromuscular junctions. They play an important role in Ca(2+)-triggered exocytosis of secretory granules in pituitary gland. They may affect their functions at synapses and in endocrine cells via their interactions with proteins from the exocytotic machinery. Likewise, alpha-type isoforms play a role in regulating the activity of postsynaptic NMDA receptors, a subtype of glutamate-gated ion channels. Both alpha-type and beta-type isoforms may play a role in the formation or maintenance of synaptic junctions via their interactions (via the extracellular domains) with neuroligin family members, CBLN1 or CBLN2. In vitro, triggers the de novo formation of presynaptic structures. May be involved in specification of excitatory synapses. Alpha-type isoforms were first identified as receptors for alpha-latrotoxin from spider venom. This chain is Neurexin-1 (Nrxn1), found in Mus musculus (Mouse).